The sequence spans 413 residues: Gamma-glutamyl phosphate reductase (413 aa).

This sequence belongs to the gamma-glutamyl phosphate reductase family.

It is found in the cytoplasm. The catalysed reaction is L-glutamate 5-semialdehyde + phosphate + NADP(+) = L-glutamyl 5-phosphate + NADPH + H(+). It functions in the pathway amino-acid biosynthesis; L-proline biosynthesis; L-glutamate 5-semialdehyde from L-glutamate: step 2/2. Catalyzes the NADPH-dependent reduction of L-glutamate 5-phosphate into L-glutamate 5-semialdehyde and phosphate. The product spontaneously undergoes cyclization to form 1-pyrroline-5-carboxylate. This Thermus thermophilus (strain ATCC 27634 / DSM 579 / HB8) protein is Gamma-glutamyl phosphate reductase.